Consider the following 446-residue polypeptide: Putative diacyglycerol O-acyltransferase Rv3371 (446 aa).

Catalysis depends on His129, which acts as the Proton acceptor. The segment at 425–446 (SRALPSAARRGRPSVPTARARH) is disordered.

The protein belongs to the long-chain O-acyltransferase family.

It catalyses the reaction an acyl-CoA + a 1,2-diacyl-sn-glycerol = a triacyl-sn-glycerol + CoA. The catalysed reaction is di-(9Z)-octadecenoylglycerol + (9Z)-octadecenoyl-CoA = 1,2,3-tri-(9Z-octadecenoyl)-glycerol + CoA. The protein operates within glycerolipid metabolism; triacylglycerol biosynthesis. Catalyzes the terminal and only committed step in triacylglycerol synthesis by using diacylglycerol and fatty acyl CoA as substrates. Required for storage lipid synthesis. Functionally, upon expression in E.coli functions weakly as a triacylglycerol synthase, making triacylglycerol (TG) from diolein and long-chain fatty acyl-CoA. Has no wax synthase activity to produce wax esters. The protein is Putative diacyglycerol O-acyltransferase Rv3371 of Mycobacterium tuberculosis (strain ATCC 25618 / H37Rv).